Reading from the N-terminus, the 366-residue chain is Ribosomal RNA large subunit methyltransferase M (366 aa).

S-adenosyl-L-methionine contacts are provided by residues Ser188, 221–224 (CPGG), Asp240, Asp260, and Asp277. The active-site Proton acceptor is the Lys306.

Belongs to the class I-like SAM-binding methyltransferase superfamily. RNA methyltransferase RlmE family. RlmM subfamily. As to quaternary structure, monomer.

It is found in the cytoplasm. It catalyses the reaction cytidine(2498) in 23S rRNA + S-adenosyl-L-methionine = 2'-O-methylcytidine(2498) in 23S rRNA + S-adenosyl-L-homocysteine + H(+). In terms of biological role, catalyzes the 2'-O-methylation at nucleotide C2498 in 23S rRNA. The protein is Ribosomal RNA large subunit methyltransferase M of Dickeya chrysanthemi (strain Ech1591) (Dickeya zeae (strain Ech1591)).